We begin with the raw amino-acid sequence, 207 residues long: Outer-membrane lipoprotein LolB (207 aa).

The signal sequence occupies residues 1–21 (MPLPDFRLIRLLPLAALVLTA). Cysteine 22 carries N-palmitoyl cysteine lipidation. Cysteine 22 is lipidated: S-diacylglycerol cysteine.

It belongs to the LolB family. In terms of assembly, monomer.

It is found in the cell outer membrane. Plays a critical role in the incorporation of lipoproteins in the outer membrane after they are released by the LolA protein. The chain is Outer-membrane lipoprotein LolB from Escherichia coli O7:K1 (strain IAI39 / ExPEC).